Here is a 375-residue protein sequence, read N- to C-terminus: Actin, cytoplasmic (375 aa).

This sequence belongs to the actin family.

The protein localises to the cytoplasm. It localises to the cytoskeleton. The catalysed reaction is ATP + H2O = ADP + phosphate + H(+). In terms of biological role, actins are highly conserved proteins that are involved in various types of cell motility and are ubiquitously expressed in all eukaryotic cells. This chain is Actin, cytoplasmic, found in Oxytricha trifallax (Sterkiella histriomuscorum).